The primary structure comprises 616 residues: 2-[(L-alanin-3-ylcarbamoyl)methyl]-3-(2-aminoethylcarbamoyl)-2-hydroxypropanoate synthase (616 aa).

The protein belongs to the IucA/IucC family. As to quaternary structure, forms a mixture of monomer and dimer in solution.

It carries out the reaction 2-[(2-aminoethylcarbamoyl)methyl]-2-hydroxybutanedioate + (S)-2,3-diaminopropanoate + ATP = 2-[(L-alanin-3-ylcarbamoyl)methyl]-3-(2-aminoethylcarbamoyl)-2-hydroxypropanoate + AMP + diphosphate. It participates in siderophore biosynthesis. Functionally, catalyzes the condensation of L-2,3-diaminopropionic acid (L-Dap) and citryl-diaminoethane to form L-2,3-diaminopropionyl-citryl-diaminoethane, the third step in staphyloferrin B biosynthesis. The chain is 2-[(L-alanin-3-ylcarbamoyl)methyl]-3-(2-aminoethylcarbamoyl)-2-hydroxypropanoate synthase from Staphylococcus aureus (strain NCTC 8325 / PS 47).